A 156-amino-acid polypeptide reads, in one-letter code: Small ribosomal subunit protein uS7 (156 aa).

This sequence belongs to the universal ribosomal protein uS7 family. In terms of assembly, part of the 30S ribosomal subunit. Contacts proteins S9 and S11.

Its function is as follows. One of the primary rRNA binding proteins, it binds directly to 16S rRNA where it nucleates assembly of the head domain of the 30S subunit. Is located at the subunit interface close to the decoding center, probably blocks exit of the E-site tRNA. The sequence is that of Small ribosomal subunit protein uS7 from Citrobacter koseri (strain ATCC BAA-895 / CDC 4225-83 / SGSC4696).